A 514-amino-acid polypeptide reads, in one-letter code: Prolyl 3,4-dihydroxylase OGFOD1 (514 aa).

One can recognise a Fe2OG dioxygenase domain in the interval 114–221 (GAVDCSCNIY…RVSISGWFHT (108 aa)). Histidine 132 and aspartate 134 together coordinate Fe cation. Tyrosine 146 is a 2-oxoglutarate binding site. Residue histidine 200 participates in Fe cation binding. Arginine 212 contributes to the 2-oxoglutarate binding site.

Belongs to the TPA1 family. In terms of assembly, monomer and homodimer. Requires Fe(2+) as cofactor. It depends on L-ascorbate as a cofactor.

The catalysed reaction is [ribosomal protein uS12]-L-proline + 2-oxoglutarate + O2 = [ribosomal protein uS12]-(3S)-3-hydroxy-L-proline + succinate + CO2. The enzyme catalyses [ribosomal protein uS12]-(3S)-3-hydroxy-L-proline + 2-oxoglutarate + O2 = [ribosomal protein uS12]-(3S)-3,4-dihydroxy-L-proline + succinate + CO2. Its function is as follows. Prolyl 3,4-dihydroxylase that catalyzes 3,4-dihydroxylation of 'Pro-61' of small ribosomal subunit uS12 (RPS23), thereby regulating protein translation termination efficiency. The chain is Prolyl 3,4-dihydroxylase OGFOD1 (Ogd) from Ostreococcus tauri.